Reading from the N-terminus, the 302-residue chain is Pseudouridine-5'-phosphate glycosidase (302 aa).

The active-site Proton donor is the Glu25. Lys86 and Val106 together coordinate substrate. Asp138 is a binding site for Mn(2+). 140 to 142 is a binding site for substrate; sequence SAD. The Nucleophile role is filled by Lys159.

Belongs to the pseudouridine-5'-phosphate glycosidase family. Homotrimer. It depends on Mn(2+) as a cofactor.

The enzyme catalyses D-ribose 5-phosphate + uracil = psi-UMP + H2O. In terms of biological role, catalyzes the reversible cleavage of pseudouridine 5'-phosphate (PsiMP) to ribose 5-phosphate and uracil. Functions biologically in the cleavage direction, as part of a pseudouridine degradation pathway. The sequence is that of Pseudouridine-5'-phosphate glycosidase from Glaesserella parasuis serovar 5 (strain SH0165) (Haemophilus parasuis).